A 110-amino-acid polypeptide reads, in one-letter code: Ribonuclease (110 aa).

Glutamate 73 serves as the catalytic Proton acceptor. Histidine 102 (proton donor) is an active-site residue.

This sequence belongs to the ribonuclease N1/T1 family.

The protein localises to the secreted. In terms of biological role, hydrolyzes phosphodiester bonds in RNA, poly- and oligoribonucleotides resulting in 3'-nucleoside monophosphates via 2',3'-cyclophosphate intermediates. The protein is Ribonuclease of Niallia circulans (Bacillus circulans).